The primary structure comprises 381 residues: 2-methylcitrate synthase 1 (381 aa).

Position 192 (His192) interacts with substrate. The active site involves His227. 260 to 264 (RIMGF) serves as a coordination point for CoA. His266 is an active-site residue. Arg275 provides a ligand contact to substrate. The active site involves Asp317. Substrate is bound by residues Arg342 and Arg361.

It belongs to the citrate synthase family. In terms of assembly, homodimer.

It carries out the reaction propanoyl-CoA + oxaloacetate + H2O = (2S,3S)-2-methylcitrate + CoA + H(+). The enzyme catalyses oxaloacetate + acetyl-CoA + H2O = citrate + CoA + H(+). It participates in carbohydrate metabolism; tricarboxylic acid cycle. Catalyzes the Claisen condensation of propionyl-CoA and oxaloacetate (OAA) to yield 2-methylcitrate (2-MC) and CoA. Also catalyzes the condensation of oxaloacetate with propionyl-CoA but with a lower specificity. This Corynebacterium glutamicum (strain ATCC 13032 / DSM 20300 / JCM 1318 / BCRC 11384 / CCUG 27702 / LMG 3730 / NBRC 12168 / NCIMB 10025 / NRRL B-2784 / 534) protein is 2-methylcitrate synthase 1 (prpC1).